The sequence spans 623 residues: MPHSDELDAGNVLAVENLNIAFMQDQQKIAAVRNLSFSLQRGETLAIVGESGSGKSVTALALMRLLEQAGGLVQCDKMLLRRRSRDVIELSEQSAAQMRHVRGADMAMIFQEPMTSLNPVFTVGEQIAESIRLHQNASREEAMVEAKRMLDQVRIPEAQTILSRYSHQLSGGMRQRVMIAMALSCRPAVLIADEPTTALDVTIQAQILQLIKVLQKEMSMGVIFITHDMGVVAEIADRVLVIYQGEAVETGTVEQIFHAPQHPYTRALLAAVPQLGAMKGLDYPRRFPLISLEHPAKQEPPIEQKTVVDGEPVLRVRNLVTRFPLRSGLLNRVTREVHAVEKVSFDLWPGETLSLVGESGSGKSTTGRALLRLVESQGGEIIFNGQRIDTLSPGKLQALRRDIQFIFQDPYASLDPRQTIGDSIIEPLRVHGLLPGKDAAARVAWLLERVGLLPEHAWRYPHEFSGGQRQRICIARALALNPKVIIADEAVSALDVSIRGQIINLLLDLQRDFGIAYLFISHDMAVVERISHRVAVMYLGQIVEIGSRCAVFENPQHPYTRKLLAAVPVAEPSRQRPQRVLLSDDLPSNIHLRGEEVAAVSLQCVGPGHYVAQPQSEYAFMRR.

ABC transporter domains follow at residues 15–269 and 314–564; these read VENL…RALL and LRVR…RKLL. Residues 49–56 and 357–364 each bind ATP; these read GESGSGKS.

This sequence belongs to the ABC transporter superfamily. Glutathione importer (TC 3.A.1.5.11) family. As to quaternary structure, the complex is composed of two ATP-binding proteins (GsiA), two transmembrane proteins (GsiC and GsiD) and a solute-binding protein (GsiB).

Its subcellular location is the cell inner membrane. It catalyses the reaction glutathione(out) + ATP + H2O = glutathione(in) + ADP + phosphate + H(+). In terms of biological role, part of the ABC transporter complex GsiABCD involved in glutathione import. Responsible for energy coupling to the transport system. This chain is Glutathione import ATP-binding protein GsiA, found in Shigella flexneri serotype 5b (strain 8401).